The chain runs to 156 residues: Small ribosomal subunit protein uS7 (156 aa).

Belongs to the universal ribosomal protein uS7 family. As to quaternary structure, part of the 30S ribosomal subunit. Contacts proteins S9 and S11.

One of the primary rRNA binding proteins, it binds directly to 16S rRNA where it nucleates assembly of the head domain of the 30S subunit. Is located at the subunit interface close to the decoding center, probably blocks exit of the E-site tRNA. This is Small ribosomal subunit protein uS7 from Xanthobacter autotrophicus (strain ATCC BAA-1158 / Py2).